Consider the following 279-residue polypeptide: Bifunctional protein FolD (279 aa).

NADP(+) contacts are provided by residues 162-164 (GRS), S187, and I228.

This sequence belongs to the tetrahydrofolate dehydrogenase/cyclohydrolase family. As to quaternary structure, homodimer.

It catalyses the reaction (6R)-5,10-methylene-5,6,7,8-tetrahydrofolate + NADP(+) = (6R)-5,10-methenyltetrahydrofolate + NADPH. The catalysed reaction is (6R)-5,10-methenyltetrahydrofolate + H2O = (6R)-10-formyltetrahydrofolate + H(+). The protein operates within one-carbon metabolism; tetrahydrofolate interconversion. Catalyzes the oxidation of 5,10-methylenetetrahydrofolate to 5,10-methenyltetrahydrofolate and then the hydrolysis of 5,10-methenyltetrahydrofolate to 10-formyltetrahydrofolate. In Acidiphilium cryptum (strain JF-5), this protein is Bifunctional protein FolD.